A 234-amino-acid polypeptide reads, in one-letter code: O-antigen biosynthesis glycosyltransferase WbnI (234 aa).

Substrate contacts are provided by residues 8-13, 93-95, and 115-118; these read ICTGEY, NAV, and HPGY. Residue E185 is the Nucleophile of the active site.

It belongs to the glycosyltransferase 6 family. Requires Mn(2+) as cofactor.

It catalyses the reaction alpha-L-Fuc-(1-&gt;2)-beta-D-Gal-(1-&gt;3)-alpha-D-GalNAc-(1-&gt;3)-alpha-D-GalNAc-di-trans,octa-cis-undecaprenyl diphosphate + UDP-alpha-D-galactose = alpha-L-Fuc-(1-&gt;2)-[alpha-D-Gal-(1-&gt;3)]-beta-D-Gal-(1-&gt;3)-alpha-D-GalNAc-(1-&gt;3)-alpha-D-GalNAc-di-trans,octa-cis-undecaprenyl diphosphate + UDP + H(+). The protein operates within bacterial outer membrane biogenesis; LPS O-antigen biosynthesis. Its function is as follows. Involved in the assembly of the O-repeating unit during O-antigen biosynthesis. This Escherichia coli protein is O-antigen biosynthesis glycosyltransferase WbnI.